The following is an 838-amino-acid chain: Kinesin-like protein KIFC2 (838 aa).

Residues 23 to 32 (AAAAEPGDPA) are compositionally biased toward low complexity. Disordered regions lie at residues 23–48 (AAAAEPGDPAQRARKPRGRRRPDLPA) and 140–185 (LLQG…GQQP). Over residues 156-167 (DGSTSQEESPSH) the composition is skewed to polar residues. Positions 186–351 (LQLEEDQRAW…SLRQGCGDLR (166 aa)) form a coiled coil. One can recognise a Kinesin motor domain in the interval 409–740 (NIRVLCRLRP…ARRSPRGRRI (332 aa)). 484–491 (GQTGTGKT) serves as a coordination point for ATP. The segment at 718–792 (RSPPTRARPP…SPGPPAPLRR (75 aa)) is disordered.

The protein belongs to the TRAFAC class myosin-kinesin ATPase superfamily. Kinesin family.

The protein resides in the cytoplasm. It is found in the cytoskeleton. May play a role in microtubule-dependent retrograde axonal transport. May function as the motor for the transport of multivesicular body (MVB)-like organelles in dendrites. The polypeptide is Kinesin-like protein KIFC2 (KIFC2) (Homo sapiens (Human)).